Consider the following 185-residue polypeptide: 3-hexulose-6-phosphate isomerase (185 aa).

The SIS domain maps to 29-172 (LADHILSSHQ…ILKLMEKKGL (144 aa)). Substrate contacts are provided by residues S47 and 86–91 (SGSGET). The active-site Proton acceptor is E152.

The protein belongs to the SIS family. PHI subfamily. As to quaternary structure, homotetramer.

It carries out the reaction D-arabino-hex-3-ulose 6-phosphate = beta-D-fructose 6-phosphate. It functions in the pathway one-carbon metabolism; formaldehyde assimilation via RuMP pathway; D-fructose 6-phosphate from D-ribulose 5-phosphate and formaldehyde: step 2/2. Its function is as follows. Catalyzes the isomerization between 3-hexulose 6-phosphate and fructose 6-phosphate. Together with HxlA, may act as a formaldehyde detoxification system. The protein is 3-hexulose-6-phosphate isomerase (hxlB) of Bacillus subtilis (strain 168).